The sequence spans 411 residues: Lissencephaly-1 homolog (411 aa).

The 33-residue stretch at 9–41 folds into the LisH domain; that stretch reads QREELNQAIADYLGSNGYADSLETFRKEADLST. The stretch at 56-83 forms a coiled coil; the sequence is TSVIRLQKKVMELEAKLTEAEKEVIEGA. WD repeat units lie at residues 106-147, 148-187, 191-230, 233-272, 275-334, 337-376, and 379-411; these read GHRA…RSLK, GHTD…ECIK, GHDH…CVKT, GHRE…CKVE, DHEH…CLLT, GHDN…CMKT, and AHQH…WECR.

This sequence belongs to the WD repeat LIS1/nudF family.

It localises to the cytoplasm. Its subcellular location is the cytoskeleton. It is found in the microtubule organizing center. The protein resides in the centrosome. Positively regulates the activity of the minus-end directed microtubule motor protein dynein. May enhance dynein-mediated microtubule sliding by targeting dynein to the microtubule plus end. Required for several dynein- and microtubule-dependent processes. This Drosophila yakuba (Fruit fly) protein is Lissencephaly-1 homolog.